Reading from the N-terminus, the 157-residue chain is Ribosomal RNA large subunit methyltransferase H (157 aa).

Residues G106 and 125–130 (LSEMTF) contribute to the S-adenosyl-L-methionine site.

Belongs to the RNA methyltransferase RlmH family. In terms of assembly, homodimer.

It localises to the cytoplasm. The enzyme catalyses pseudouridine(1915) in 23S rRNA + S-adenosyl-L-methionine = N(3)-methylpseudouridine(1915) in 23S rRNA + S-adenosyl-L-homocysteine + H(+). Specifically methylates the pseudouridine at position 1915 (m3Psi1915) in 23S rRNA. The polypeptide is Ribosomal RNA large subunit methyltransferase H (Syntrophobacter fumaroxidans (strain DSM 10017 / MPOB)).